The following is a 258-amino-acid chain: Synaptosomal-associated protein 29 (258 aa).

The tract at residues 1–43 (MSAYPRSYNPFDEDAEDEDARPAPWSDSRDLADGPGAPADRQQ) is disordered. 3 positions are modified to phosphoserine: S65, S77, and S114. Residues 76–107 (VSAEELVRQRGALERTEKMVDKMEQDLKTSQK) are a coiled coil. 2 disordered regions span residues 127–147 (PAETPSAQNGTLTPQPSGRLK) and 161–188 (QASHPNLRKLQDSDSIPGGAGSAVSSEA). Residues T130 and T137 each carry the phosphothreonine modification. Residues 131 to 142 (PSAQNGTLTPQP) show a composition bias toward polar residues. Phosphoserine occurs at positions 163, 182, 185, 204, and 210. The t-SNARE coiled-coil homology domain occupies 196 to 258 (RACHQRIDSN…TSTERKVRQL (63 aa)).

Belongs to the SNAP-25 family. Forms a SNARE complex, composed of VAMP8, SNAP29 and STX17, involved in fusion of autophagosome with lysosome. Interacts with multiple syntaxins including STX6. Interacts with EIPR1. Interacts with STX17; this interaction is increased in the absence of TMEM39A.

The protein localises to the cytoplasm. It localises to the golgi apparatus membrane. Its subcellular location is the cytoplasmic vesicle. It is found in the autophagosome membrane. The protein resides in the cell projection. The protein localises to the cilium membrane. In terms of biological role, SNAREs, soluble N-ethylmaleimide-sensitive factor-attachment protein receptors, are essential proteins for fusion of cellular membranes. SNAREs localized on opposing membranes assemble to form a trans-SNARE complex, an extended, parallel four alpha-helical bundle that drives membrane fusion. SNAP29 is a SNARE involved in autophagy through the direct control of autophagosome membrane fusion with the lysososome membrane. Also plays a role in ciliogenesis by regulating membrane fusions. The protein is Synaptosomal-associated protein 29 of Bos taurus (Bovine).